The sequence spans 431 residues: MKLLALFPFLAIVIQLSCWELGTDALPSGGFVRTKGVQFSLNGYPYYANGFNAYWLMYVASDPSQRSKISTAFQDASRHGLTVARTWAFSDGGYRALQYSPGSYNEDMFQGLDFALAEARRHGIKIILSFANNYESFGGRKQYVDWARSRGRPVSSEDDFFTDSLVKDFYKNHIKAVLNRFNTFTKVHYKDDPTIMAWELMNEPRCPSDPSGRAIQAWITEMAAHVKSLDRNHLLEAGLEGFYGQSSPQSKTLNPPGQFGTDFIANNRIPGIDFVTVHSYPDEWFPDSSEQSQMDFLNKWLDAHIQDAQNVLHKPIILAEFGKSMKKPGYTPAQRDIVFNTVYSKIYGSAKRGGAAAGGLFWQLLVNGIDNFQDGYGIILSQSSSTVNVISQQSRKLTLIRKIFARMINVEKWKRARGQGQVGKRGHKINN.

The first 25 residues, 1-25 (MKLLALFPFLAIVIQLSCWELGTDA), serve as a signal peptide directing secretion. Trp87 and Asn202 together coordinate substrate. Catalysis depends on Glu203, which acts as the Proton donor. Residue Tyr280 coordinates substrate. Glu320 (nucleophile) is an active-site residue. Trp362 contacts substrate.

The protein belongs to the glycosyl hydrolase 5 (cellulase A) family. In terms of tissue distribution, expressed in stems, flowers, siliques and seeds. Expressed in root vasculature, leaf hydathodes, anther filaments, stigma, sepal vasculature, at the base and apical parts of siliques, and replum. Expressed in the micropylar endosperm and radicle tip in early germinating seeds.

It is found in the secreted. It carries out the reaction Random hydrolysis of (1-&gt;4)-beta-D-mannosidic linkages in mannans, galactomannans and glucomannans.. In terms of biological role, required for both, loosening of the micropylar endosperm, and rupture of the seed coat in germinating seeds. May participate in the hydrolysis of the mannans in the cell wall of germinating seeds. In Arabidopsis thaliana (Mouse-ear cress), this protein is Mannan endo-1,4-beta-mannosidase 7 (MAN7).